A 123-amino-acid polypeptide reads, in one-letter code: Small ribosomal subunit protein uS12 (123 aa).

Residues 1 to 23 (MPTISQLVKKGREKVEKKTKSPA) form a disordered region. Residue D89 is modified to 3-methylthioaspartic acid.

Belongs to the universal ribosomal protein uS12 family. In terms of assembly, part of the 30S ribosomal subunit. Contacts proteins S8 and S17. May interact with IF1 in the 30S initiation complex.

In terms of biological role, with S4 and S5 plays an important role in translational accuracy. Its function is as follows. Interacts with and stabilizes bases of the 16S rRNA that are involved in tRNA selection in the A site and with the mRNA backbone. Located at the interface of the 30S and 50S subunits, it traverses the body of the 30S subunit contacting proteins on the other side and probably holding the rRNA structure together. The combined cluster of proteins S8, S12 and S17 appears to hold together the shoulder and platform of the 30S subunit. This is Small ribosomal subunit protein uS12 from Thermodesulfovibrio yellowstonii (strain ATCC 51303 / DSM 11347 / YP87).